The chain runs to 4923 residues: Bridge-like lipid transfer protein family member 1 (4923 aa).

Residues 25 to 45 (FVWLLVATIMSCGWIIYLTYY) traverse the membrane as a helical segment. Disordered regions lie at residues 160-179 (NRDE…SVHI), 606-631 (HSKS…KPRW), 1203-1277 (SLHV…SARL), 1300-1334 (FSSE…DSST), 1357-1400 (TEEF…SVEG), 1471-1494 (TNKR…SEES), 1630-1660 (SAAK…DLSI), 1878-1948 (RDGV…PDSS), 2191-2235 (SKSH…LQCN), 2262-2281 (PHRA…RTGN), 2355-2375 (NTLD…QEDL), 2550-2655 (RYTA…SEQS), 2885-2910 (IRQP…VSIN), 3564-3596 (YSNS…IKVE), 3645-3695 (FSPT…RKSA), 3739-3797 (LHPS…SLQS), 3848-3884 (GMRD…AKGK), 4017-4071 (PTSA…TGPP), 4102-4124 (AVTG…SSVT), 4249-4309 (DGQT…AAAQ), and 4797-4827 (RMFA…EKEE). Positions 1210–1226 (SHSSASSSEENSSSSAA) are enriched in low complexity. A compositionally biased stretch (polar residues) spans 1237-1248 (PSPSTELMNVTT). The segment covering 1260–1271 (SPLRSPLKRQSS) has biased composition (low complexity). The segment covering 1641–1658 (TEGTTPGSLSTPHGQTDL) has biased composition (polar residues). Residues 1887–1898 (SSGSQTGSGYST) show a composition bias toward low complexity. Polar residues predominate over residues 1907-1920 (NDAQSPASEPNNNS). Positions 1921-1931 (DSDEQDEGVES) are enriched in acidic residues. Polar residues-rich tracts occupy residues 2208-2218 (PYQSLSYTSGD) and 2267-2281 (EQTA…RTGN). Residues 2550-2560 (RYTAGSSSPTP) are compositionally biased toward polar residues. Over residues 2606–2624 (TRSREPRGRGTLGRSERRT) the composition is skewed to basic and acidic residues. The segment covering 3581–3595 (KRSDRPREDLPDIKV) has biased composition (basic and acidic residues). Residues 3746-3770 (TEHEDLALRRSCERSSRSLDQDSPP) show a composition bias toward basic and acidic residues. Residues 4017-4039 (PTSATYPSEGQHTPSSTPPSVHN) show a composition bias toward polar residues. The segment covering 4044-4056 (PGGPSTGLGSPLG) has biased composition (low complexity). Polar residues-rich tracts occupy residues 4249–4268 (DGQT…TPSH), 4276–4286 (TGRTRSVSDSS), and 4804–4814 (GQKSPTTQQDE). Residues 4816-4827 (SSDKKEEREKEE) show a composition bias toward basic and acidic residues.

It is found in the cell membrane. The protein localises to the endoplasmic reticulum membrane. Its subcellular location is the mitochondrion membrane. Its function is as follows. Tube-forming lipid transport protein which provides phosphatidylethanolamine for glycosylphosphatidylinositol (GPI) anchor synthesis in the endoplasmic reticulum. Plays a role in endosomal trafficking and endosome recycling. Also involved in the actin cytoskeleton and cilia structural dynamics. Acts as a regulator of phagocytosis. In Danio rerio (Zebrafish), this protein is Bridge-like lipid transfer protein family member 1 (bltp1).